Consider the following 248-residue polypeptide: NADP-dependent 3-hydroxy acid dehydrogenase YdfG (248 aa).

Residues 7-12, 32-33, 54-55, and asparagine 81 each bind NADP(+); these read GATAGF, RR, and DV. Residue serine 134 participates in substrate binding. NADP(+) contacts are provided by residues tyrosine 147, lysine 151, and 177–185; that span reads PGLVGGTEF. Catalysis depends on tyrosine 147, which acts as the Proton acceptor.

The protein belongs to the short-chain dehydrogenases/reductases (SDR) family. In terms of assembly, homotetramer.

It carries out the reaction 3-hydroxypropanoate + NADP(+) = 3-oxopropanoate + NADPH + H(+). It catalyses the reaction L-allo-threonine + NADP(+) = aminoacetone + CO2 + NADPH. In terms of biological role, NADP-dependent dehydrogenase with broad substrate specificity acting on 3-hydroxy acids. Catalyzes the NADP-dependent oxidation of L-allo-threonine to L-2-amino-3-keto-butyrate, which is spontaneously decarboxylated into aminoacetone. Also acts on D-threonine, L-serine, D-serine, D-3-hydroxyisobutyrate, L-3-hydroxyisobutyrate, D-glycerate and L-glycerate. Able to catalyze the reduction of the malonic semialdehyde to 3-hydroxypropionic acid. YdfG is apparently supplementing RutE, the presumed malonic semialdehyde reductase involved in pyrimidine degradation since both are able to detoxify malonic semialdehyde. This chain is NADP-dependent 3-hydroxy acid dehydrogenase YdfG, found in Escherichia coli O6:H1 (strain CFT073 / ATCC 700928 / UPEC).